The primary structure comprises 363 residues: MKYTPLYEEHVKLGAKMVDFAGFNMPIQYTSIKDEVLAVRKNVGMFDVSHMGEVIVEGKDSTKFVDFLITNDFKNLKPGEIVYTAMCNENGGFVDDLLAYKISEEKAMLVINASNIEKDFSWMKKISESFDVTLENKSDEYVLIAVQGPNAQKTLQKITNVDLEQIGYYTFTEGNVLDIKAIISRTGYTGEDGFEIYTTDKDGIIKIWKKLLNLNVIPAGLGARDCLRLEASLLLYGNDMDETITPLEVGIKWAVKFEKDFMGKEALKRQLEEGTSRRLKGFKIIDKGIARHGYKVFKDGKEIGYVTSGTFSPTLNQAIGMALIEKGYKSGEIIEIEIRNKLVKAEIVKMPFYRGSVKSKKKG.

This sequence belongs to the GcvT family. In terms of assembly, the glycine cleavage system is composed of four proteins: P, T, L and H.

It catalyses the reaction N(6)-[(R)-S(8)-aminomethyldihydrolipoyl]-L-lysyl-[protein] + (6S)-5,6,7,8-tetrahydrofolate = N(6)-[(R)-dihydrolipoyl]-L-lysyl-[protein] + (6R)-5,10-methylene-5,6,7,8-tetrahydrofolate + NH4(+). In terms of biological role, the glycine cleavage system catalyzes the degradation of glycine. This Thermosipho melanesiensis (strain DSM 12029 / CIP 104789 / BI429) protein is Aminomethyltransferase.